The chain runs to 134 residues: STAG3-like protein 3 (134 aa).

An SCD domain is found at 10-95 (PKVTCRDVLP…GCFKDWMVSM (86 aa)).

It belongs to the SCC3 family.

The protein localises to the nucleus. The chain is STAG3-like protein 3 (STAG3L3) from Homo sapiens (Human).